A 462-amino-acid chain; its full sequence is Adenosylhomocysteinase (462 aa).

Substrate contacts are provided by threonine 55, aspartate 128, and glutamate 188. 189-191 (TTT) contributes to the NAD(+) binding site. Substrate-binding residues include lysine 218 and aspartate 222. Residues asparagine 223, 252 to 257 (GYGDVG), glutamate 275, asparagine 310, 331 to 333 (IGH), and asparagine 376 each bind NAD(+).

The protein belongs to the adenosylhomocysteinase family. The cofactor is NAD(+).

It localises to the cytoplasm. The enzyme catalyses S-adenosyl-L-homocysteine + H2O = L-homocysteine + adenosine. It participates in amino-acid biosynthesis; L-homocysteine biosynthesis; L-homocysteine from S-adenosyl-L-homocysteine: step 1/1. May play a key role in the regulation of the intracellular concentration of adenosylhomocysteine. In Roseobacter denitrificans (strain ATCC 33942 / OCh 114) (Erythrobacter sp. (strain OCh 114)), this protein is Adenosylhomocysteinase.